The sequence spans 90 residues: Small ribosomal subunit protein bS16 (90 aa).

The protein belongs to the bacterial ribosomal protein bS16 family.

The protein is Small ribosomal subunit protein bS16 of Bacillus cytotoxicus (strain DSM 22905 / CIP 110041 / 391-98 / NVH 391-98).